A 190-amino-acid chain; its full sequence is Ribosome maturation factor RimP (190 aa).

Residues 159–190 (ELELAGGIPEGRVAPADADASEDEEVVEGLDK) are disordered. Over residues 177–190 (DASEDEEVVEGLDK) the composition is skewed to acidic residues.

This sequence belongs to the RimP family.

The protein resides in the cytoplasm. Its function is as follows. Required for maturation of 30S ribosomal subunits. The chain is Ribosome maturation factor RimP from Rhodococcus opacus (strain B4).